A 119-amino-acid chain; its full sequence is Large ribosomal subunit protein uL18 (119 aa).

The protein belongs to the universal ribosomal protein uL18 family. As to quaternary structure, part of the 50S ribosomal subunit; part of the 5S rRNA/L5/L18/L25 subcomplex. Contacts the 5S and 23S rRNAs.

Functionally, this is one of the proteins that bind and probably mediate the attachment of the 5S RNA into the large ribosomal subunit, where it forms part of the central protuberance. This chain is Large ribosomal subunit protein uL18, found in Clostridium botulinum (strain Loch Maree / Type A3).